Reading from the N-terminus, the 191-residue chain is Lipid A 1-phosphatase (191 aa).

A run of 5 helical transmembrane segments spans residues 22–42 (LLAL…PKVP), 60–80 (FIPT…VGLF), 117–137 (GNFN…AFLM), 145–162 (YLWL…RIYL), and 164–184 (MHTI…VGLF).

Belongs to the lipid A LpxE 1-phosphatase family.

It localises to the cell inner membrane. It participates in bacterial outer membrane biogenesis; LPS lipid A biosynthesis. In terms of biological role, removes the 1-phosphate group from tetra- and probably hexaacylated lipid A species. Absence of the 1-phosphate group renders the bacteria partially resistant to host-derived cationic antimicrobial peptides (CAMP), allowing it to camouflage itself from the host innate immune response, and plays a role in the long-term colonization of the host's stomach. This is Lipid A 1-phosphatase from Helicobacter pylori (strain J99 / ATCC 700824) (Campylobacter pylori J99).